Consider the following 299-residue polypeptide: Taste receptor type 2 member 50 (299 aa).

Position 1 (methionine 1) is a topological domain, extracellular. The helical transmembrane segment at 2–22 threads the bilayer; the sequence is ITFLYIFFSILILVLFVLGNF. Over 23–55 the chain is Cytoplasmic; the sequence is ANGFIALVNFIDWVKRKKISSADQILTALAVSR. Residues 56–76 traverse the membrane as a helical segment; that stretch reads IGLLWALLLNWYLTVLNPAFY. The Extracellular portion of the chain corresponds to 77 to 87; sequence SVELRITSYNA. Residues 88 to 108 traverse the membrane as a helical segment; that stretch reads WVVTNHFSMWLAASLSIFYLL. At 109–126 the chain is on the cytoplasmic side; the sequence is KIANFSNLIFLHLKRRVR. The helical transmembrane segment at 127-147 threads the bilayer; the sequence is SVILVILLGTLIFLVCHLLVA. At 148-181 the chain is on the extracellular side; it reads NMDESMWAEEYEGNMTGKMKLRNTVHLSYLTVTT. Asparagine 161 carries N-linked (GlcNAc...) asparagine glycosylation. A helical transmembrane segment spans residues 182-202; it reads LWSFIPFTLSLISFLMLICSL. At 203-229 the chain is on the cytoplasmic side; sequence CKHLKKMQLHGEGSQDLSTKVHIKALQ. The helical transmembrane segment at 230–250 threads the bilayer; it reads TLISFLLLCAIFFLFLIISVW. At 251 to 259 the chain is on the extracellular side; that stretch reads SPRRLQNDP. A helical membrane pass occupies residues 260–280; it reads VVMVSKAVGNIYLAFDSFILI. The Cytoplasmic portion of the chain corresponds to 281 to 299; that stretch reads WRTKKLKHTFLLILCQIRC.

Belongs to the G-protein coupled receptor T2R family.

Its subcellular location is the membrane. Receptor that may play a role in the perception of bitterness and is gustducin-linked. May play a role in sensing the chemical composition of the gastrointestinal content. The activity of this receptor may stimulate alpha gustducin, mediate PLC-beta-2 activation and lead to the gating of TRPM5. The protein is Taste receptor type 2 member 50 (TAS2R50) of Gorilla gorilla gorilla (Western lowland gorilla).